A 336-amino-acid chain; its full sequence is Sex determination protein tasselseed-2 (336 aa).

Residue 59-83 (IVTGGARGIGEAIVRLFAKHGARVV) coordinates NAD(+). Serine 194 contributes to the substrate binding site. The Proton acceptor role is filled by tyrosine 207.

Belongs to the short-chain dehydrogenases/reductases (SDR) family.

Functionally, required for stage-specific floral organ abortion. This Zea mays (Maize) protein is Sex determination protein tasselseed-2 (TS2).